A 707-amino-acid polypeptide reads, in one-letter code: Ribosomal RNA large subunit methyltransferase K/L (707 aa).

In terms of domain architecture, THUMP spans 44-155 (VIYNLCLWSR…NDILTVSFDL (112 aa)).

It belongs to the methyltransferase superfamily. RlmKL family.

The protein resides in the cytoplasm. The catalysed reaction is guanosine(2445) in 23S rRNA + S-adenosyl-L-methionine = N(2)-methylguanosine(2445) in 23S rRNA + S-adenosyl-L-homocysteine + H(+). It carries out the reaction guanosine(2069) in 23S rRNA + S-adenosyl-L-methionine = N(2)-methylguanosine(2069) in 23S rRNA + S-adenosyl-L-homocysteine + H(+). In terms of biological role, specifically methylates the guanine in position 2445 (m2G2445) and the guanine in position 2069 (m7G2069) of 23S rRNA. This is Ribosomal RNA large subunit methyltransferase K/L from Legionella pneumophila (strain Lens).